The sequence spans 960 residues: Pentatricopeptide repeat-containing protein At3g63370, chloroplastic (960 aa).

A chloroplast-targeting transit peptide spans 1 to 64 (MEYAVTNMRL…PKLACFDGVL (64 aa)). 20 PPR repeats span residues 79 to 109 (PVEA…IFKT), 115 to 145 (LDFL…MPDR), 146 to 180 (TAFA…GVPL), 181 to 215 (GLSS…GYHS), 216 to 246 (TGFI…FQEK), 248 to 282 (DAVL…GPAP), 283 to 317 (NSYT…STHS), 319 to 349 (ELYV…MNNA), 350 to 384 (DVVT…GHKS), 385 to 419 (DEVS…GWDS), 420 to 450 (NLQV…MHDK), 451 to 485 (DLIS…RMEI), 486 to 516 (DEMI…ILRK), 520 to 550 (DTVI…IKGK), 551 to 585 (DVVS…GLSA), 586 to 620 (DSVA…GFCL), 621 to 651 (EGSI…IERK), 652 to 686 (GLLQ…NVSP), 687 to 717 (DHIS…MEHE), and 723 to 753 (WPEH…MKTE). The type E motif stretch occupies residues 758–833 (VWCALLAACR…HPGCSWIEMD (76 aa)). A type E(+) motif region spans residues 834–864 (GKVHKFTARDKSHPESKEIYEKLSEVTRKLE). The type DYW motif stretch occupies residues 865-960 (REVGYVADTK…SGLCSCGDSW (96 aa)).

This sequence belongs to the PPR family. PCMP-H subfamily.

The protein resides in the plastid. Its subcellular location is the chloroplast. In terms of biological role, involved in RNA editing event in chloroplasts. Required for the editing of a single site in rps14 transcript. In Arabidopsis thaliana (Mouse-ear cress), this protein is Pentatricopeptide repeat-containing protein At3g63370, chloroplastic (PCMP-H83).